A 67-amino-acid chain; its full sequence is Small ribosomal subunit protein eS17 (67 aa).

It belongs to the eukaryotic ribosomal protein eS17 family.

In Pyrococcus abyssi (strain GE5 / Orsay), this protein is Small ribosomal subunit protein eS17.